A 233-amino-acid chain; its full sequence is Histidinol dehydrogenase (233 aa).

Positions 31, 53, and 56 each coordinate substrate. Residues Gln53 and His56 each coordinate Zn(2+). Active-site proton acceptor residues include Glu121 and His122. Residues His122, Asp155, Glu209, and His214 each coordinate substrate. Residue Asp155 coordinates Zn(2+). His214 contacts Zn(2+).

The protein belongs to the histidinol dehydrogenase family. Zn(2+) serves as cofactor.

The enzyme catalyses L-histidinol + 2 NAD(+) + H2O = L-histidine + 2 NADH + 3 H(+). It functions in the pathway amino-acid biosynthesis; L-histidine biosynthesis; L-histidine from 5-phospho-alpha-D-ribose 1-diphosphate: step 9/9. Its function is as follows. Catalyzes the sequential NAD-dependent oxidations of L-histidinol to L-histidinaldehyde and then to L-histidine. The sequence is that of Histidinol dehydrogenase (hisD) from Thiocapsa roseopersicina.